An 84-amino-acid chain; its full sequence is Large ribosomal subunit protein bL31B (84 aa).

Belongs to the bacterial ribosomal protein bL31 family. Type B subfamily. In terms of assembly, part of the 50S ribosomal subunit.

The polypeptide is Large ribosomal subunit protein bL31B (Parabacteroides distasonis (strain ATCC 8503 / DSM 20701 / CIP 104284 / JCM 5825 / NCTC 11152)).